The primary structure comprises 118 residues: Ribonuclease P protein component (118 aa).

It belongs to the RnpA family. In terms of assembly, consists of a catalytic RNA component (M1 or rnpB) and a protein subunit.

It catalyses the reaction Endonucleolytic cleavage of RNA, removing 5'-extranucleotides from tRNA precursor.. Its function is as follows. RNaseP catalyzes the removal of the 5'-leader sequence from pre-tRNA to produce the mature 5'-terminus. It can also cleave other RNA substrates such as 4.5S RNA. The protein component plays an auxiliary but essential role in vivo by binding to the 5'-leader sequence and broadening the substrate specificity of the ribozyme. In Petrotoga mobilis (strain DSM 10674 / SJ95), this protein is Ribonuclease P protein component.